Reading from the N-terminus, the 687-residue chain is Glycine--tRNA ligase beta subunit (687 aa).

This sequence belongs to the class-II aminoacyl-tRNA synthetase family. In terms of assembly, tetramer of two alpha and two beta subunits.

The protein resides in the cytoplasm. It catalyses the reaction tRNA(Gly) + glycine + ATP = glycyl-tRNA(Gly) + AMP + diphosphate. This is Glycine--tRNA ligase beta subunit from Neisseria gonorrhoeae (strain NCCP11945).